Here is a 137-residue protein sequence, read N- to C-terminus: Probable DNA-directed RNA polymerases I, II, and III subunit RPABC2 (137 aa).

2 stretches are compositionally biased toward acidic residues: residues 1–27 and 34–43; these read MADEDDYQDMDNDDFVDDNEMEDVIEE and NEDEDDDNVD. Residues 1-43 form a disordered region; the sequence is MADEDDYQDMDNDDFVDDNEMEDVIEEDPQRPDNEDEDDDNVD.

The protein belongs to the archaeal Rpo6/eukaryotic RPB6 RNA polymerase subunit family. As to quaternary structure, component of the RNA polymerase I (Pol I), RNA polymerase II (Pol II) and RNA polymerase III (Pol III) complexes consisting of at least 13, 12 and 17 subunits, respectively.

It is found in the nucleus. DNA-dependent RNA polymerases catalyze the transcription of DNA into RNA using the four ribonucleoside triphosphates as substrates. Common component of RNA polymerases I, II and III which synthesize ribosomal RNA precursors, mRNA precursors and many functional non-coding RNAs, and small RNAs, such as 5S rRNA and tRNAs, respectively. Pol II is the central component of the basal RNA polymerase II transcription machinery. Pols are composed of mobile elements that move relative to each other. In Pol II, RPB6 is part of the clamp element and together with parts of RPB1 and RPB2 forms a pocket to which the RPB4-RPB7 subcomplex binds. In Caenorhabditis elegans, this protein is Probable DNA-directed RNA polymerases I, II, and III subunit RPABC2 (rpb-6).